The sequence spans 389 residues: E3 ubiquitin-protein ligase E3D (389 aa).

Residue alanine 2 is modified to N-acetylalanine. The BRAT1-like motif signature appears at 129 to 159 (PLPSENWGALVGEWCCHPDPFANKPLHPQEN). Zn(2+) is bound at residue cysteine 144. The segment at 235–257 (QSSERSFPIIPRPRFVQSVIAQC) is interaction with UBE2C. The segment at 353–389 (LPSATCLELLLILSKSNANLPSSLRHMNSFQVAFLKI) is HECT-like.

Interacts with UBE2C/UbcH10 (E2 ubiquitin-conjugating enzyme). In vitro, interacts with cyclin-B. Post-translationally, ubiquitinated by UBCH10 (E2 ubiquitin-conjugating enzyme).

The protein resides in the cytoplasm. It catalyses the reaction S-ubiquitinyl-[E2 ubiquitin-conjugating enzyme]-L-cysteine + [acceptor protein]-L-lysine = [E2 ubiquitin-conjugating enzyme]-L-cysteine + N(6)-ubiquitinyl-[acceptor protein]-L-lysine.. It participates in protein modification; protein ubiquitination. In terms of biological role, E3 ubiquitin-protein ligase which accepts ubiquitin from specific E2 ubiquitin-conjugating enzymes, and transfers it to substrates, generally promoting their degradation by the proteasome. Independently of its E3 ubiquitin-protein ligase activity, acts as an inhibitor of CPSF3 endonuclease activity by blocking CPSF3 active site. The protein is E3 ubiquitin-protein ligase E3D (UBE3D) of Pongo abelii (Sumatran orangutan).